The chain runs to 327 residues: Movement protein (327 aa).

A coiled-coil region spans residues 297–327 (SASSSNTENELARVSQNIDLLKNKLKEICGE).

This sequence belongs to the caulimoviridae movement protein family. In terms of assembly, homotrimer, through the coiled-coil domain. Interacts with VAP. May interact (via N-terminus) with host prenylated Rab acceptor protein 1D (PRA1D).

The protein resides in the host cell junction. It is found in the host plasmodesma. In terms of biological role, transports viral genome to neighboring plant cells directly through plasmosdesmata, without any budding. The movement protein allows efficient cell to cell propagation, by bypassing the host cell wall barrier. Acts by forming tubules structures that increase the size exclusion limit (SEL) of plasmodesmata, thereby allowing viral ribonucleocapsids to spread directly to neighboring cells. In Cauliflower mosaic virus (strain Strasbourg) (CaMV), this protein is Movement protein.